The chain runs to 163 residues: Acetolactate synthase isozyme 3 small subunit (163 aa).

Positions 4-78 (ILSVLLENES…DVLRVSELGQ (75 aa)) constitute an ACT domain.

This sequence belongs to the acetolactate synthase small subunit family. As to quaternary structure, dimer of large and small chains.

It carries out the reaction 2 pyruvate + H(+) = (2S)-2-acetolactate + CO2. It participates in amino-acid biosynthesis; L-isoleucine biosynthesis; L-isoleucine from 2-oxobutanoate: step 1/4. It functions in the pathway amino-acid biosynthesis; L-valine biosynthesis; L-valine from pyruvate: step 1/4. Sensitive to valine inhibition. The polypeptide is Acetolactate synthase isozyme 3 small subunit (ilvH) (Salmonella typhimurium (strain LT2 / SGSC1412 / ATCC 700720)).